We begin with the raw amino-acid sequence, 892 residues long: Translation initiation factor IF-2 (892 aa).

A compositionally biased stretch (basic and acidic residues) spans Glu-165 to Thr-175. 2 disordered regions span residues Glu-165–Ser-250 and Glu-264–Phe-300. Residues Pro-208 to Ser-222 are compositionally biased toward low complexity. Positions Pro-391–Lys-560 constitute a tr-type G domain. GTP is bound by residues Gly-400–Thr-407, Asp-446–His-450, and Ser-500–Asp-503.

It belongs to the TRAFAC class translation factor GTPase superfamily. Classic translation factor GTPase family. IF-2 subfamily.

It localises to the cytoplasm. One of the essential components for the initiation of protein synthesis. Protects formylmethionyl-tRNA from spontaneous hydrolysis and promotes its binding to the 30S ribosomal subunits. Also involved in the hydrolysis of GTP during the formation of the 70S ribosomal complex. The chain is Translation initiation factor IF-2 from Xylella fastidiosa (strain 9a5c).